Here is a 494-residue protein sequence, read N- to C-terminus: Guanosine-5'-triphosphate,3'-diphosphate pyrophosphatase (494 aa).

This sequence belongs to the GppA/Ppx family. GppA subfamily.

It carries out the reaction guanosine 3'-diphosphate 5'-triphosphate + H2O = guanosine 3',5'-bis(diphosphate) + phosphate + H(+). It functions in the pathway purine metabolism; ppGpp biosynthesis; ppGpp from GTP: step 2/2. In terms of biological role, catalyzes the conversion of pppGpp to ppGpp. Guanosine pentaphosphate (pppGpp) is a cytoplasmic signaling molecule which together with ppGpp controls the 'stringent response', an adaptive process that allows bacteria to respond to amino acid starvation, resulting in the coordinated regulation of numerous cellular activities. The chain is Guanosine-5'-triphosphate,3'-diphosphate pyrophosphatase from Shigella dysenteriae serotype 1 (strain Sd197).